The following is a 319-amino-acid chain: Inositol phosphoceramide mannosyltransferase 1 (319 aa).

Residues 8-28 (LLLKGIPICGVILLILWGYSL) traverse the membrane as a helical segment. N-linked (GlcNAc...) asparagine glycosylation is found at asparagine 115 and asparagine 198. 2 helical membrane passes run 211-231 (PTVF…KYLL) and 279-299 (VLFF…RVVF).

Belongs to the glycosyltransferase 32 family.

The protein localises to the golgi apparatus. The protein resides in the cis-Golgi network membrane. It is found in the trans-Golgi network membrane. In terms of biological role, with imt2 and imt3, is required for the synthesis of mannosyl phosphorylinositol ceramide (MIPC). Catalyzes the addition of mannosyl to phosphorylinositol ceramide (IPC). MIPC is essential for cell morphology, cell-surface distribution of ergosterol, localization for plasma-membrane transporters, and lipid-raft-mediated endocytosis of plasma membrane proteins to the vacuole. This chain is Inositol phosphoceramide mannosyltransferase 1 (imt1), found in Schizosaccharomyces pombe (strain 972 / ATCC 24843) (Fission yeast).